The primary structure comprises 212 residues: uncharacterized protein (212 aa).

3 residues coordinate S-adenosyl-L-methionine: Gly-53, Glu-74, and Asp-97.

Belongs to the methyltransferase superfamily. YrrT family.

Could be a S-adenosyl-L-methionine-dependent methyltransferase. This is an uncharacterized protein from Bacillus cereus (strain ATCC 14579 / DSM 31 / CCUG 7414 / JCM 2152 / NBRC 15305 / NCIMB 9373 / NCTC 2599 / NRRL B-3711).